The primary structure comprises 75 residues: Large ribosomal subunit protein bL31 (75 aa).

Zn(2+) is bound by residues C16, C18, C37, and C40.

It belongs to the bacterial ribosomal protein bL31 family. Type A subfamily. In terms of assembly, part of the 50S ribosomal subunit. Zn(2+) serves as cofactor.

In terms of biological role, binds the 23S rRNA. This chain is Large ribosomal subunit protein bL31, found in Pseudomonas syringae pv. tomato (strain ATCC BAA-871 / DC3000).